The sequence spans 277 residues: S-formylglutathione hydrolase FrmB (277 aa).

Active-site charge relay system residues include serine 145, aspartate 221, and histidine 254.

This sequence belongs to the esterase D family.

It carries out the reaction S-formylglutathione + H2O = formate + glutathione + H(+). Its function is as follows. Serine hydrolase involved in the detoxification of formaldehyde. Hydrolyzes S-formylglutathione to glutathione and formate. The polypeptide is S-formylglutathione hydrolase FrmB (frmB) (Escherichia coli (strain SMS-3-5 / SECEC)).